A 71-amino-acid chain; its full sequence is UPF0346 protein SAK_1533 (71 aa).

Belongs to the UPF0346 family.

This is UPF0346 protein SAK_1533 from Streptococcus agalactiae serotype Ia (strain ATCC 27591 / A909 / CDC SS700).